Here is a 308-residue protein sequence, read N- to C-terminus: Uricase (308 aa).

Catalysis depends on charge relay system residues lysine 5 and threonine 65. Urate is bound by residues threonine 65, aspartate 66, phenylalanine 177, arginine 194, isoleucine 242, glutamine 243, and asparagine 269. A disordered region spans residues 283–308 (ASVLREPPAPTGFQQFSMDRGDLDEQ).

This sequence belongs to the uricase family.

It catalyses the reaction urate + O2 + H2O = 5-hydroxyisourate + H2O2. It participates in purine metabolism; urate degradation; (S)-allantoin from urate: step 1/3. Functionally, catalyzes the oxidation of uric acid to 5-hydroxyisourate, which is further processed to form (S)-allantoin. In Haloferax volcanii (strain ATCC 29605 / DSM 3757 / JCM 8879 / NBRC 14742 / NCIMB 2012 / VKM B-1768 / DS2) (Halobacterium volcanii), this protein is Uricase.